The sequence spans 363 residues: Chorismate synthase (363 aa).

NADP(+) contacts are provided by Arg-48 and Arg-54. FMN-binding positions include Arg-125–Ser-127, Asn-237–Ala-238, Gly-277, Lys-292–Ser-296, and Arg-318.

The protein belongs to the chorismate synthase family. As to quaternary structure, homotetramer. FMNH2 serves as cofactor.

The catalysed reaction is 5-O-(1-carboxyvinyl)-3-phosphoshikimate = chorismate + phosphate. Its pathway is metabolic intermediate biosynthesis; chorismate biosynthesis; chorismate from D-erythrose 4-phosphate and phosphoenolpyruvate: step 7/7. Catalyzes the anti-1,4-elimination of the C-3 phosphate and the C-6 proR hydrogen from 5-enolpyruvylshikimate-3-phosphate (EPSP) to yield chorismate, which is the branch point compound that serves as the starting substrate for the three terminal pathways of aromatic amino acid biosynthesis. This reaction introduces a second double bond into the aromatic ring system. The protein is Chorismate synthase of Pseudomonas syringae pv. syringae (strain B728a).